The chain runs to 224 residues: Heme response regulator HssR (224 aa).

Residues 3–116 form the Response regulatory domain; sequence NCLIVDDDKK…ELLFRIKAVL (114 aa). Asp-52 carries the post-translational modification 4-aspartylphosphate. Residues 124 to 222 constitute a DNA-binding region (ompR/PhoB-type); the sequence is DNELQLGNLI…VRGQGYRVDQ (99 aa).

Post-translationally, phosphorylated by HssS.

The protein resides in the cytoplasm. In terms of biological role, member of the two-component regulatory system HssS/HssR involved in intracellular heme homeostasis and tempering of staphylococcal virulence. Phosphorylated HssR binds to a direct repeat sequence within hrtAB promoter and activates the expression of hrtAB, an efflux pump, in response to extracellular heme, hemin, hemoglobin or blood. The protein is Heme response regulator HssR (hssR) of Staphylococcus epidermidis (strain ATCC 35984 / DSM 28319 / BCRC 17069 / CCUG 31568 / BM 3577 / RP62A).